A 75-amino-acid polypeptide reads, in one-letter code: Putative membrane protein insertion efficiency factor (75 aa).

It belongs to the UPF0161 family.

It is found in the cell membrane. In terms of biological role, could be involved in insertion of integral membrane proteins into the membrane. In Halalkalibacterium halodurans (strain ATCC BAA-125 / DSM 18197 / FERM 7344 / JCM 9153 / C-125) (Bacillus halodurans), this protein is Putative membrane protein insertion efficiency factor.